Consider the following 249-residue polypeptide: DNA polymerase sliding clamp 1 (249 aa).

The protein belongs to the PCNA family. As to quaternary structure, homotrimer. The subunits circularize to form a toroid; DNA passes through its center. Replication factor C (RFC) is required to load the toroid on the DNA.

In terms of biological role, sliding clamp subunit that acts as a moving platform for DNA processing. Responsible for tethering the catalytic subunit of DNA polymerase and other proteins to DNA during high-speed replication. In Pyrobaculum aerophilum (strain ATCC 51768 / DSM 7523 / JCM 9630 / CIP 104966 / NBRC 100827 / IM2), this protein is DNA polymerase sliding clamp 1.